The chain runs to 314 residues: uncharacterized protein (314 aa).

This is an uncharacterized protein from Acanthamoeba polyphaga mimivirus (APMV).